Here is a 318-residue protein sequence, read N- to C-terminus: Ubiquitin-conjugating enzyme E2 J1 (318 aa).

Residues 1-282 are Cytoplasmic-facing; that stretch reads METRYNLKSP…QGHQPRDNHT (282 aa). A UBC core domain is found at 10 to 160; it reads PAVKRLMKEA…GCGSAMKDVL (151 aa). The active-site Glycyl thioester intermediate is Cys91. Ser184 carries the post-translational modification Phosphoserine; by MAPKAPK2. Residues 229–248 are compositionally biased toward polar residues; the sequence is LQNSSAASFHQPTQPVAKNT. The tract at residues 229–283 is disordered; it reads LQNSSAASFHQPTQPVAKNTSMSPRQRRAQQQSQRRLSTSPDVIQGHQPRDNHTD. Positions 249 to 268 are enriched in low complexity; sequence SMSPRQRRAQQQSQRRLSTS. Phosphoserine is present on residues Ser266 and Ser268. The chain crosses the membrane as a helical; Anchor for type IV membrane protein span at residues 283–303; sequence DHGGSAVLIVILTLALAALIF. The Lumenal portion of the chain corresponds to 304 to 318; sequence RRIYLANEYIFDFEL.

Belongs to the ubiquitin-conjugating enzyme family. As to quaternary structure, component of the HRD1 complex, which comprises at least SYNV1/HRD1, DERL1/2, FAM8A1, HERPUD1/HERP, OS9, SEL1L and UBE2J1. Interacts with E3 ligase RNF26. Interacts with E3 ligase RNF133. Phosphorylated at Ser-184 in a cytosolic stress-dependent manner by MAP kinase p38 MAPKAPK2. In terms of processing, phosphorylated UBE2J1 is rapidly ubiquitinated and subsequently degraded by the proteasome. Expressed in testes.

Its subcellular location is the endoplasmic reticulum membrane. The catalysed reaction is S-ubiquitinyl-[E1 ubiquitin-activating enzyme]-L-cysteine + [E2 ubiquitin-conjugating enzyme]-L-cysteine = [E1 ubiquitin-activating enzyme]-L-cysteine + S-ubiquitinyl-[E2 ubiquitin-conjugating enzyme]-L-cysteine.. It participates in protein modification; protein ubiquitination. Its function is as follows. Catalyzes the covalent attachment of ubiquitin to other proteins. Functions in the selective degradation of misfolded membrane proteins from the endoplasmic reticulum (ERAD) and is essential for cells to recover from ER stress. Plays a role in MAPKAPK2-dependent translational control of TNF-alpha synthesis. Also acts as a platform for perinuclear positioning of the endosomal system by mediating ubiquitination of SQSTM1 through interaction with the E3 ubiquitin-protein ligase RNF26. Plays a role in male fecundity through the interaction with the E3 ubiquitin-protein ligase RNF133. Functionally, (Microbial infection) Promotes Dengue virus RNA replication by negatively regulating IFN-beta signaling and mediating 'Lys-48'-linked ubiquitination on IRF3. The sequence is that of Ubiquitin-conjugating enzyme E2 J1 from Homo sapiens (Human).